A 337-amino-acid polypeptide reads, in one-letter code: MRLTASAIAGQFGLTVLGDGSTEVSGVATLAHAGAGQLSFLSNPRYRPQLADSQAAVVVLRADDAEAAKGTALVAKDPYTAFAKIAALFDVAQVCEPGIHPSAFIDPTAQVSPGAHVGPFVSIGARSRVGDGCVIGTGSLIGADCVVDDGSELLARVTLVTRVRLGKRVRIHPGAVIGADGFGLAMDAGHWIKVPQLGGVVIGDDCEIGANTCIDRGALEDTVLEEDVRVDNLVQIAHNCRIGAHSAIAGCSGIAGSAKIGRYCLLGGHVGVVGHLEICDKVVITGKSVVRNSINEPGEYSSGTPLTDNRTWRKNAARFKQLDVLARRILAVGKEKE.

The Proton acceptor role is filled by histidine 238.

Belongs to the transferase hexapeptide repeat family. LpxD subfamily. In terms of assembly, homotrimer.

It catalyses the reaction a UDP-3-O-[(3R)-3-hydroxyacyl]-alpha-D-glucosamine + a (3R)-hydroxyacyl-[ACP] = a UDP-2-N,3-O-bis[(3R)-3-hydroxyacyl]-alpha-D-glucosamine + holo-[ACP] + H(+). It participates in bacterial outer membrane biogenesis; LPS lipid A biosynthesis. In terms of biological role, catalyzes the N-acylation of UDP-3-O-acylglucosamine using 3-hydroxyacyl-ACP as the acyl donor. Is involved in the biosynthesis of lipid A, a phosphorylated glycolipid that anchors the lipopolysaccharide to the outer membrane of the cell. The sequence is that of UDP-3-O-acylglucosamine N-acyltransferase from Xanthomonas oryzae pv. oryzae (strain MAFF 311018).